Reading from the N-terminus, the 930-residue chain is Translation initiation factor IF-2 (930 aa).

Residues F50–V67 are compositionally biased toward low complexity. 2 disordered regions span residues F50–E217 and E260–P346. Composition is skewed to basic and acidic residues over residues S68–P90 and F110–R125. Residues K129–R141 show a composition bias toward low complexity. 2 stretches are compositionally biased toward basic and acidic residues: residues R157–K167 and V262–R295. The segment covering N309–N318 has biased composition (low complexity). Over residues V337 to P346 the composition is skewed to basic and acidic residues. The 168-residue stretch at E432 to E599 folds into the tr-type G domain. Positions G441–T448 are G1. Residue G441–T448 participates in GTP binding. The segment at G466 to H470 is G2. The interval D487–G490 is G3. GTP-binding positions include D487–H491 and N541–D544. Residues N541–D544 are G4. Positions S577–K579 are G5.

It belongs to the TRAFAC class translation factor GTPase superfamily. Classic translation factor GTPase family. IF-2 subfamily.

The protein resides in the cytoplasm. One of the essential components for the initiation of protein synthesis. Protects formylmethionyl-tRNA from spontaneous hydrolysis and promotes its binding to the 30S ribosomal subunits. Also involved in the hydrolysis of GTP during the formation of the 70S ribosomal complex. This Streptococcus pneumoniae (strain ATCC 700669 / Spain 23F-1) protein is Translation initiation factor IF-2.